Reading from the N-terminus, the 344-residue chain is Probable aldo-keto reductase 1 (344 aa).

Tyr63 (proton donor) is an active-site residue. His130 contacts substrate. NADP(+) is bound at residue 209–219 (SPLGLGFFAAG).

The protein belongs to the aldo/keto reductase family.

This is Probable aldo-keto reductase 1 from Arabidopsis thaliana (Mouse-ear cress).